A 447-amino-acid polypeptide reads, in one-letter code: Tubulin beta-1 chain (447 aa).

Positions 11, 69, 138, 142, 143, 144, 204, and 226 each coordinate GTP. Glutamate 69 contributes to the Mg(2+) binding site.

It belongs to the tubulin family. As to quaternary structure, dimer of alpha and beta chains. A typical microtubule is a hollow water-filled tube with an outer diameter of 25 nm and an inner diameter of 15 nM. Alpha-beta heterodimers associate head-to-tail to form protofilaments running lengthwise along the microtubule wall with the beta-tubulin subunit facing the microtubule plus end conferring a structural polarity. Microtubules usually have 13 protofilaments but different protofilament numbers can be found in some organisms and specialized cells. Requires Mg(2+) as cofactor.

The protein localises to the cytoplasm. The protein resides in the cytoskeleton. In terms of biological role, tubulin is the major constituent of microtubules, a cylinder consisting of laterally associated linear protofilaments composed of alpha- and beta-tubulin heterodimers. Microtubules grow by the addition of GTP-tubulin dimers to the microtubule end, where a stabilizing cap forms. Below the cap, tubulin dimers are in GDP-bound state, owing to GTPase activity of alpha-tubulin. This is Tubulin beta-1 chain (benA) from Emericella nidulans (strain FGSC A4 / ATCC 38163 / CBS 112.46 / NRRL 194 / M139) (Aspergillus nidulans).